The sequence spans 131 residues: Small ribosomal subunit protein uS8 (131 aa).

The protein belongs to the universal ribosomal protein uS8 family. In terms of assembly, part of the 30S ribosomal subunit. Contacts proteins S5 and S12.

One of the primary rRNA binding proteins, it binds directly to 16S rRNA central domain where it helps coordinate assembly of the platform of the 30S subunit. The chain is Small ribosomal subunit protein uS8 from Azoarcus sp. (strain BH72).